The primary structure comprises 197 residues: 3-isopropylmalate dehydratase small subunit (197 aa).

Belongs to the LeuD family. LeuD type 1 subfamily. Heterodimer of LeuC and LeuD.

The enzyme catalyses (2R,3S)-3-isopropylmalate = (2S)-2-isopropylmalate. It functions in the pathway amino-acid biosynthesis; L-leucine biosynthesis; L-leucine from 3-methyl-2-oxobutanoate: step 2/4. Functionally, catalyzes the isomerization between 2-isopropylmalate and 3-isopropylmalate, via the formation of 2-isopropylmaleate. The chain is 3-isopropylmalate dehydratase small subunit from Corynebacterium glutamicum (strain R).